A 62-amino-acid chain; its full sequence is Large ribosomal subunit protein bL33 (62 aa).

It belongs to the bacterial ribosomal protein bL33 family.

The sequence is that of Large ribosomal subunit protein bL33 from Phocaeicola vulgatus (strain ATCC 8482 / DSM 1447 / JCM 5826 / CCUG 4940 / NBRC 14291 / NCTC 11154) (Bacteroides vulgatus).